Reading from the N-terminus, the 396-residue chain is Probable sugar efflux transporter (396 aa).

Transmembrane regions (helical) follow at residues 15–35 (VVTL…PVGL), 50–70 (VGIM…PFML), 81–101 (LICL…SWSF), 103–123 (VLVI…SITA), 136–156 (AQAL…GLPL), 170–190 (FFAI…LLPL), 209–229 (PALM…YTAY), 246–266 (FATA…VIFG), 275–295 (TLVS…LPAA), 299–319 (IHLG…GLGM), 333–353 (VAMA…ALVG), and 364–384 (MIGY…IIIF).

Belongs to the major facilitator superfamily. SotB (TC 2.A.1.2) family.

The protein resides in the cell inner membrane. Involved in the efflux of sugars. The physiological role may be the reduction of the intracellular concentration of toxic sugars or sugar metabolites. This chain is Probable sugar efflux transporter, found in Escherichia coli (strain SMS-3-5 / SECEC).